The following is a 126-amino-acid chain: Holo-[acyl-carrier-protein] synthase (126 aa).

The Mg(2+) site is built by D9 and E58.

This sequence belongs to the P-Pant transferase superfamily. AcpS family. The cofactor is Mg(2+).

It localises to the cytoplasm. The catalysed reaction is apo-[ACP] + CoA = holo-[ACP] + adenosine 3',5'-bisphosphate + H(+). In terms of biological role, transfers the 4'-phosphopantetheine moiety from coenzyme A to a Ser of acyl-carrier-protein. In Hamiltonella defensa subsp. Acyrthosiphon pisum (strain 5AT), this protein is Holo-[acyl-carrier-protein] synthase.